The following is a 196-amino-acid chain: NADPH:quinone oxidoreductase (196 aa).

It belongs to the SsuE family. As to quaternary structure, homotetramer. Requires FMN as cofactor.

The protein localises to the cell membrane. The catalysed reaction is a quinone + NADH + H(+) = a quinol + NAD(+). It catalyses the reaction a quinone + NADPH + H(+) = a quinol + NADP(+). The enzyme apparently serves as a quinone reductase in connection with conjugation reactions of hydroquinones involved in detoxification pathways. The polypeptide is NADPH:quinone oxidoreductase (NQR) (Arabidopsis thaliana (Mouse-ear cress)).